The sequence spans 122 residues: Large ribosomal subunit protein uL14 (122 aa).

The protein belongs to the universal ribosomal protein uL14 family. Part of the 50S ribosomal subunit. Forms a cluster with proteins L3 and L19. In the 70S ribosome, L14 and L19 interact and together make contacts with the 16S rRNA in bridges B5 and B8.

Functionally, binds to 23S rRNA. Forms part of two intersubunit bridges in the 70S ribosome. In Bradyrhizobium diazoefficiens (strain JCM 10833 / BCRC 13528 / IAM 13628 / NBRC 14792 / USDA 110), this protein is Large ribosomal subunit protein uL14.